The following is a 333-amino-acid chain: Biotin synthase (333 aa).

The 231-residue stretch at 51–281 (HFGNQVSLCG…DVHITICGGR (231 aa)) folds into the Radical SAM core domain. Positions 69, 73, and 76 each coordinate [4Fe-4S] cluster. Residue Cys-206 coordinates [2Fe-2S] cluster.

It belongs to the radical SAM superfamily. Biotin synthase family. In terms of assembly, homodimer. It depends on [4Fe-4S] cluster as a cofactor. Requires [2Fe-2S] cluster as cofactor.

It carries out the reaction (4R,5S)-dethiobiotin + (sulfur carrier)-SH + 2 reduced [2Fe-2S]-[ferredoxin] + 2 S-adenosyl-L-methionine = (sulfur carrier)-H + biotin + 2 5'-deoxyadenosine + 2 L-methionine + 2 oxidized [2Fe-2S]-[ferredoxin]. It participates in cofactor biosynthesis; biotin biosynthesis; biotin from 7,8-diaminononanoate: step 2/2. Catalyzes the conversion of dethiobiotin (DTB) to biotin by the insertion of a sulfur atom into dethiobiotin via a radical-based mechanism. The polypeptide is Biotin synthase (Trichlorobacter lovleyi (strain ATCC BAA-1151 / DSM 17278 / SZ) (Geobacter lovleyi)).